The sequence spans 150 residues: SsrA-binding protein (150 aa).

This sequence belongs to the SmpB family.

Its subcellular location is the cytoplasm. Its function is as follows. Required for rescue of stalled ribosomes mediated by trans-translation. Binds to transfer-messenger RNA (tmRNA), required for stable association of tmRNA with ribosomes. tmRNA and SmpB together mimic tRNA shape, replacing the anticodon stem-loop with SmpB. tmRNA is encoded by the ssrA gene; the 2 termini fold to resemble tRNA(Ala) and it encodes a 'tag peptide', a short internal open reading frame. During trans-translation Ala-aminoacylated tmRNA acts like a tRNA, entering the A-site of stalled ribosomes, displacing the stalled mRNA. The ribosome then switches to translate the ORF on the tmRNA; the nascent peptide is terminated with the 'tag peptide' encoded by the tmRNA and targeted for degradation. The ribosome is freed to recommence translation, which seems to be the essential function of trans-translation. The chain is SsrA-binding protein from Borreliella afzelii (strain PKo) (Borrelia afzelii).